The primary structure comprises 562 residues: Lamassu protein LmuB (562 aa).

In terms of biological role, component of antiviral defense system Lamassu type I, composed of LmuA and LmuB. Expression of Lamassu type I in B.subtilis (strain BEST7003) confers resistance to phages phi3T, SpBeta and SPR. May be an ATPase. In Bacillus sp. (strain NCIM 5461 / CCTCC AB 2011126 / NIO-1130), this protein is Lamassu protein LmuB.